The chain runs to 82 residues: Putative defensin-like protein 70 (82 aa).

A signal peptide spans 1–27 (MKMESSKMLVVFTLMVLIAVSSDLVSG). Disulfide bonds link Cys39–Cys80, Cys43–Cys66, Cys52–Cys78, and Cys56–Cys79.

It belongs to the DEFL family.

It is found in the secreted. In Arabidopsis thaliana (Mouse-ear cress), this protein is Putative defensin-like protein 70 (LCR83).